A 137-amino-acid chain; its full sequence is MAWKRELTLAALNASSENTMVAHLGIIYTRLEAGLLEAEMPVDARTHQPFGLLHGGASAALAETLGSMAGWLMTEEGQCVVGTELNATHHRPVSSGKVRGECRPLHLGRQSQSWEIVVYDEKGRRCCTCRLGTAVLG.

Glutamate 63 (nucleophile or proton acceptor) is an active-site residue.

Belongs to the thioesterase PaaI family. Homotetramer. Dimer of dimers. Interacts specifically with the aryl carrier protein (ArCP) domain of EntB.

It is found in the cytoplasm. Its pathway is siderophore biosynthesis; enterobactin biosynthesis. Functionally, required for optimal enterobactin synthesis. Acts as a proofreading enzyme that prevents EntB misacylation by hydrolyzing the thioester bound existing between EntB and wrongly charged molecules. The sequence is that of Proofreading thioesterase EntH (entH) from Klebsiella pneumoniae subsp. pneumoniae (strain ATCC 700721 / MGH 78578).